The sequence spans 213 residues: DNA-directed RNA polymerase subunit alpha (213 aa).

The protein belongs to the RNA polymerase alpha chain family. As to quaternary structure, in plastids the minimal PEP RNA polymerase catalytic core is composed of four subunits: alpha, beta, beta', and beta''. When a (nuclear-encoded) sigma factor is associated with the core the holoenzyme is formed, which can initiate transcription.

The protein localises to the plastid. Its subcellular location is the chloroplast. The catalysed reaction is RNA(n) + a ribonucleoside 5'-triphosphate = RNA(n+1) + diphosphate. DNA-dependent RNA polymerase catalyzes the transcription of DNA into RNA using the four ribonucleoside triphosphates as substrates. The chain is DNA-directed RNA polymerase subunit alpha (rpoA) from Euglena stellata.